Here is a 652-residue protein sequence, read N- to C-terminus: Tetracycline resistance protein TetP (652 aa).

The region spanning 2–252 (KKIINIGIVA…CSYFPFASND (251 aa)) is the tr-type G domain. GTP is bound by residues 11-18 (AHVDAGKT), 75-79 (DTPGH), and 129-132 (NKLD).

This sequence belongs to the TRAFAC class translation factor GTPase superfamily. Classic translation factor GTPase family. TetM/TetO subfamily.

Its function is as follows. Abolishes the inhibitory effect of tetracyclin on protein synthesis by a non-covalent modification of the ribosomes. The protein is Tetracycline resistance protein TetP (tetP) of Clostridium perfringens.